Here is a 250-residue protein sequence, read N- to C-terminus: Isoprenyl transferase (250 aa).

Residue Asp27 is part of the active site. Position 27 (Asp27) interacts with Mg(2+). Substrate is bound by residues 28–31, Trp32, His48, and 76–78; these read GNRR and STE. Asn79 serves as the catalytic Proton acceptor. Residues Phe80, Arg82, Arg199, and 205–207 each bind substrate; that span reads RVS. Glu218 serves as a coordination point for Mg(2+).

This sequence belongs to the UPP synthase family. Homodimer. It depends on Mg(2+) as a cofactor.

Its function is as follows. Catalyzes the condensation of isopentenyl diphosphate (IPP) with allylic pyrophosphates generating different type of terpenoids. This chain is Isoprenyl transferase, found in Chlamydia abortus (strain DSM 27085 / S26/3) (Chlamydophila abortus).